Consider the following 364-residue polypeptide: PHD finger protein 6 (364 aa).

Ser2 carries the post-translational modification N-acetylserine. Short sequence motifs (nuclear localization signal) lie at residues 13-16 (RQRK) and 129-133 (RKHKK). The C2HC pre-PHD-type 1 zinc-finger motif lies at 14 to 52 (QRKCGFCKSNRDKECGQLLISENQKVAAHHKCMLFSSAL). An extended PHD1 domain (ePHD1) region spans residues 14 to 132 (QRKCGFCKSN…IYMVYCRKHK (119 aa)). A PHD-type 1 zinc finger spans residues 80 to 132 (LMCSLCHCPGATIGCDVKTCHRTYHYHCALHDKAQIREKPSQGIYMVYCRKHK). 3 positions are modified to phosphoserine: Ser138, Ser145, and Ser155. Positions 139 to 211 (EADLEESFNE…RSSPNDTRPK (73 aa)) are disordered. A Nucleolar localization signal motif is present at residues 157–169 (KTKKKSRKGRPRK). Over residues 157 to 171 (KTKKKSRKGRPRKTN) the composition is skewed to basic residues. Lys173 participates in a covalent cross-link: Glycyl lysine isopeptide (Lys-Gly) (interchain with G-Cter in SUMO2). Phosphoserine is present on residues Ser183 and Ser199. The segment at 209-249 (RPKCGFCHVGEEENEARGKLHIFNAKKAAAHYKCMLFSSGT) adopts a C2HC pre-PHD-type 2 zinc-finger fold. The interval 209 to 330 (RPKCGFCHVG…IYKLYCKNHS (122 aa)) is extended PHD2 domain (ePHD2). Residue Lys227 forms a Glycyl lysine isopeptide (Lys-Gly) (interchain with G-Cter in SUMO2) linkage. The segment at 278–330 (MKCTLCSQPGATIGCEIKACVKTYHYHCGVQDKAKYIENMSRGIYKLYCKNHS) adopts a PHD-type 2 zinc-finger fold. Residues 330–364 (SGNDERDEEDEERESKSRGRVAIDQQLTQQQLNGN) are disordered. Polar residues predominate over residues 354–364 (QQLTQQQLNGN). Thr357 carries the post-translational modification Phosphothreonine.

Interacts with UBTF. Interacts with the NuRD complex component RBBP4 (via the nucleolar localization motif), the interaction mediates transcriptional repression activity. As to expression, at 12.5 dpc it is highly expressed in the embryonic central nervous system and at lower levels in other tissues. Very low levels present throughout the adult brain.

The protein resides in the nucleus. It is found in the nucleolus. Its subcellular location is the chromosome. The protein localises to the centromere. It localises to the kinetochore. Functionally, transcriptional regulator that associates with ribosomal RNA promoters and suppresses ribosomal RNA (rRNA) transcription. In Mus musculus (Mouse), this protein is PHD finger protein 6 (Phf6).